A 243-amino-acid chain; its full sequence is Large ribosomal subunit protein uL2 (243 aa).

A disordered region spans residues 202–243 (HGGGRHQHVGQSSTVSRNAPPGAKVGSIAARKTGRAKIKDRR). Over residues 233 to 243 (KTGRAKIKDRR) the composition is skewed to basic residues.

The protein belongs to the universal ribosomal protein uL2 family. In terms of assembly, part of the 50S ribosomal subunit. Forms a bridge to the 30S subunit in the 70S ribosome.

Its function is as follows. One of the primary rRNA binding proteins. Required for association of the 30S and 50S subunits to form the 70S ribosome, for tRNA binding and peptide bond formation. It has been suggested to have peptidyltransferase activity; this is somewhat controversial. Makes several contacts with the 16S rRNA in the 70S ribosome. This is Large ribosomal subunit protein uL2 from Cenarchaeum symbiosum (strain A).